Consider the following 448-residue polypeptide: Lipoamide acyltransferase component of branched-chain alpha-keto acid dehydrogenase complex, mitochondrial (448 aa).

The Lipoyl-binding domain occupies 30–105 (VVQFKLSDIG…RVGQALIDVE (76 aa)). Lysine 71 is modified (N6-lipoyllysine). Disordered stretches follow at residues 108 to 146 (GNVE…GKVL) and 191 to 211 (TSGS…SKSY). A compositionally biased stretch (low complexity) spans 121 to 136 (ASSSPEAPKSSAPKAP). Residues 146 to 183 (LATPAVRRIAIENKIKLAEVRGTGKDGRVLKEDVLKFL) enclose the Peripheral subunit-binding (PSBD) domain. The segment covering 191–210 (TSGSTNIRTTHQAPQPSSKS) has biased composition (polar residues). Residues arginine 257, serine 272, aspartate 315, serine 365, asparagine 366, glycine 390, and isoleucine 392 each contribute to the CoA site. Catalysis depends on residues histidine 418 and aspartate 422.

It belongs to the 2-oxoacid dehydrogenase family. It depends on (R)-lipoate as a cofactor. Ubiquitously expressed.

It is found in the mitochondrion matrix. It localises to the cytoplasm. The protein resides in the cytosol. The protein localises to the cell projection. Its subcellular location is the dendrite. It is found in the cilium. It carries out the reaction N(6)-[(R)-dihydrolipoyl]-L-lysyl-[protein] + 2-methylpropanoyl-CoA = N(6)-[(R)-S(8)-2-methylpropanoyldihydrolipoyl]-L-lysyl-[protein] + CoA. The branched-chain alpha-keto dehydrogenase complex catalyzes the overall conversion of alpha-keto acids to acyl-CoA and CO(2). It contains multiple copies of three enzymatic components: branched-chain alpha-keto acid decarboxylase (E1), lipoamide acyltransferase (E2) and lipoamide dehydrogenase (E3). Within this complex, the catalytic function of this enzyme is to accept, and to transfer to coenzyme A, acyl groups that are generated by the branched-chain alpha-keto acid decarboxylase component. Required for the catabolism of branched-chain amino acids and the subsequent synthesis of monomethyl branched-chain fatty acids, which are important for regulating postembryonic growth. This Caenorhabditis elegans protein is Lipoamide acyltransferase component of branched-chain alpha-keto acid dehydrogenase complex, mitochondrial.